Here is a 349-residue protein sequence, read N- to C-terminus: NADH-quinone oxidoreductase subunit H (349 aa).

Transmembrane regions (helical) follow at residues 16–36, 88–108, 123–143, 157–177, 202–222, 264–284, 285–305, and 325–345; these read WPVV…MGCV, GLFI…WAVV, LLFL…AGWA, AAQM…VLLI, FLSW…ISGI, ILVS…PVGF, LPDG…IFLW, and VFIP…MSPL.

The protein belongs to the complex I subunit 1 family. NDH-1 is composed of 14 different subunits. Subunits NuoA, H, J, K, L, M, N constitute the membrane sector of the complex.

It is found in the cell inner membrane. The enzyme catalyses a quinone + NADH + 5 H(+)(in) = a quinol + NAD(+) + 4 H(+)(out). Its function is as follows. NDH-1 shuttles electrons from NADH, via FMN and iron-sulfur (Fe-S) centers, to quinones in the respiratory chain. The immediate electron acceptor for the enzyme in this species is believed to be ubiquinone. Couples the redox reaction to proton translocation (for every two electrons transferred, four hydrogen ions are translocated across the cytoplasmic membrane), and thus conserves the redox energy in a proton gradient. This subunit may bind ubiquinone. This is NADH-quinone oxidoreductase subunit H from Azoarcus sp. (strain BH72).